The chain runs to 517 residues: Ribose import ATP-binding protein RbsA 1 (517 aa).

ABC transporter domains lie at 11–251 (LEMR…VGRD) and 263–507 (YDPG…ALAT). 43–50 (GENGAGKS) contacts ATP.

It belongs to the ABC transporter superfamily. Ribose importer (TC 3.A.1.2.1) family. The complex is composed of an ATP-binding protein (RbsA), two transmembrane proteins (RbsC) and a solute-binding protein (RbsB).

The protein resides in the cell inner membrane. The enzyme catalyses D-ribose(out) + ATP + H2O = D-ribose(in) + ADP + phosphate + H(+). Its function is as follows. Part of the ABC transporter complex RbsABC involved in ribose import. Responsible for energy coupling to the transport system. This chain is Ribose import ATP-binding protein RbsA 1, found in Burkholderia cenocepacia (strain HI2424).